We begin with the raw amino-acid sequence, 197 residues long: RNA pyrophosphohydrolase (197 aa).

The 144-residue stretch at 6 to 149 folds into the Nudix hydrolase domain; sequence GYRPNVGIVI…KRDVYRKAMK (144 aa). The short motif at 38 to 59 is the Nudix box element; the sequence is GGINDGETPEQAMYRELYEEVG. The segment at 165–197 is disordered; it reads LSTNNNDEKKANYSAKKPYSPYRNQDKKRKTRV.

It belongs to the Nudix hydrolase family. RppH subfamily. The cofactor is a divalent metal cation.

Its function is as follows. Accelerates the degradation of transcripts by removing pyrophosphate from the 5'-end of triphosphorylated RNA, leading to a more labile monophosphorylated state that can stimulate subsequent ribonuclease cleavage. The protein is RNA pyrophosphohydrolase of Mannheimia succiniciproducens (strain KCTC 0769BP / MBEL55E).